The sequence spans 188 residues: HGPRTase-like protein 1 (188 aa).

The protein belongs to the purine/pyrimidine phosphoribosyltransferase family. Archaeal HPRT subfamily.

May catalyze a purine salvage reaction, the substrate is unknown. This Haloferax volcanii (strain ATCC 29605 / DSM 3757 / JCM 8879 / NBRC 14742 / NCIMB 2012 / VKM B-1768 / DS2) (Halobacterium volcanii) protein is HGPRTase-like protein 1.